A 232-amino-acid chain; its full sequence is RNA chaperone ProQ (232 aa).

The disordered stretch occupies residues 105 to 182 (EAKARVQAQR…REEQHTPVSD (78 aa)). The segment covering 117–136 (QQAKKREAAAAAGEKEDAPR) has biased composition (basic and acidic residues). Basic residues predominate over residues 137-146 (RERKPRPTTP). Basic and acidic residues predominate over residues 147–177 (RRKEGAERKPRSQKPVEKAPKTVKAPREEQH).

Belongs to the ProQ family.

Its subcellular location is the cytoplasm. Its function is as follows. RNA chaperone with significant RNA binding, RNA strand exchange and RNA duplexing activities. May regulate ProP activity through an RNA-based, post-transcriptional mechanism. The sequence is that of RNA chaperone ProQ from Escherichia coli (strain UTI89 / UPEC).